A 138-amino-acid polypeptide reads, in one-letter code: Large ribosomal subunit protein uL16 (138 aa).

Belongs to the universal ribosomal protein uL16 family. As to quaternary structure, part of the 50S ribosomal subunit.

Its function is as follows. Binds 23S rRNA and is also seen to make contacts with the A and possibly P site tRNAs. This is Large ribosomal subunit protein uL16 from Ureaplasma urealyticum serovar 10 (strain ATCC 33699 / Western).